Consider the following 319-residue polypeptide: Pantothenate kinase (319 aa).

Residue 97–104 (GSVAVGKS) participates in ATP binding.

This sequence belongs to the prokaryotic pantothenate kinase family.

It localises to the cytoplasm. The enzyme catalyses (R)-pantothenate + ATP = (R)-4'-phosphopantothenate + ADP + H(+). Its pathway is cofactor biosynthesis; coenzyme A biosynthesis; CoA from (R)-pantothenate: step 1/5. This chain is Pantothenate kinase, found in Mesorhizobium japonicum (strain LMG 29417 / CECT 9101 / MAFF 303099) (Mesorhizobium loti (strain MAFF 303099)).